We begin with the raw amino-acid sequence, 339 residues long: Biotin synthase (339 aa).

The 219-residue stretch at 53 to 271 folds into the Radical SAM core domain; sequence NAIQMSRLLS…IALARILMPR (219 aa). [4Fe-4S] cluster-binding residues include Cys68, Cys72, and Cys75. Residues Cys112, Cys143, Cys203, and Arg275 each contribute to the [2Fe-2S] cluster site.

This sequence belongs to the radical SAM superfamily. Biotin synthase family. In terms of assembly, homodimer. [4Fe-4S] cluster serves as cofactor. The cofactor is [2Fe-2S] cluster.

The enzyme catalyses (4R,5S)-dethiobiotin + (sulfur carrier)-SH + 2 reduced [2Fe-2S]-[ferredoxin] + 2 S-adenosyl-L-methionine = (sulfur carrier)-H + biotin + 2 5'-deoxyadenosine + 2 L-methionine + 2 oxidized [2Fe-2S]-[ferredoxin]. It functions in the pathway cofactor biosynthesis; biotin biosynthesis; biotin from 7,8-diaminononanoate: step 2/2. Functionally, catalyzes the conversion of dethiobiotin (DTB) to biotin by the insertion of a sulfur atom into dethiobiotin via a radical-based mechanism. The sequence is that of Biotin synthase from Agrobacterium fabrum (strain C58 / ATCC 33970) (Agrobacterium tumefaciens (strain C58)).